The primary structure comprises 946 residues: Bifunctional glutamine synthetase adenylyltransferase/adenylyl-removing enzyme (946 aa).

Residues 1 to 440 are adenylyl removase; sequence MKPLSSPLQQ…VFNELIGDDE (440 aa). Positions 449–946 are adenylyl transferase; it reads SEQWRELWQD…ASWQKWLVEE (498 aa).

This sequence belongs to the GlnE family. Mg(2+) is required as a cofactor.

It carries out the reaction [glutamine synthetase]-O(4)-(5'-adenylyl)-L-tyrosine + phosphate = [glutamine synthetase]-L-tyrosine + ADP. It catalyses the reaction [glutamine synthetase]-L-tyrosine + ATP = [glutamine synthetase]-O(4)-(5'-adenylyl)-L-tyrosine + diphosphate. In terms of biological role, involved in the regulation of glutamine synthetase GlnA, a key enzyme in the process to assimilate ammonia. When cellular nitrogen levels are high, the C-terminal adenylyl transferase (AT) inactivates GlnA by covalent transfer of an adenylyl group from ATP to specific tyrosine residue of GlnA, thus reducing its activity. Conversely, when nitrogen levels are low, the N-terminal adenylyl removase (AR) activates GlnA by removing the adenylyl group by phosphorolysis, increasing its activity. The regulatory region of GlnE binds the signal transduction protein PII (GlnB) which indicates the nitrogen status of the cell. The polypeptide is Bifunctional glutamine synthetase adenylyltransferase/adenylyl-removing enzyme (Escherichia coli O9:H4 (strain HS)).